Here is a 506-residue protein sequence, read N- to C-terminus: Maturase K (506 aa).

This sequence belongs to the intron maturase 2 family. MatK subfamily.

It is found in the plastid. The protein localises to the chloroplast. In terms of biological role, usually encoded in the trnK tRNA gene intron. Probably assists in splicing its own and other chloroplast group II introns. This chain is Maturase K, found in Rhododendron ferrugineum (Alpenrose).